Consider the following 355-residue polypeptide: Putative arylamide transporter (355 aa).

The next 6 membrane-spanning stretches (helical) occupy residues 22–42 (TVLW…YLTH), 44–64 (VFNH…MSAT), 71–91 (RAQQ…GVHA), 92–112 (LLGS…SVAV), 119–139 (VAQG…VLVF), and 150–170 (LFDA…LFPP).

The protein localises to the cell membrane. In terms of biological role, may be involved in the import of arylamide compounds. The polypeptide is Putative arylamide transporter (Mycobacterium bovis (strain ATCC BAA-935 / AF2122/97)).